The chain runs to 164 residues: Large ribosomal subunit protein uL11 (164 aa).

Belongs to the universal ribosomal protein uL11 family. Part of the ribosomal stalk of the 50S ribosomal subunit. Interacts with L10 and the large rRNA to form the base of the stalk. L10 forms an elongated spine to which L12 dimers bind in a sequential fashion forming a multimeric L10(L12)X complex.

Its function is as follows. Forms part of the ribosomal stalk which helps the ribosome interact with GTP-bound translation factors. The sequence is that of Large ribosomal subunit protein uL11 from Pyrococcus horikoshii (strain ATCC 700860 / DSM 12428 / JCM 9974 / NBRC 100139 / OT-3).